The following is a 1887-amino-acid chain: ATP-dependent DNA helicase tlh1 (1887 aa).

Residues 329–347 (NQQRREQQDKGENKKRQDD) show a composition bias toward basic and acidic residues. 3 disordered regions span residues 329 to 372 (NQQR…EEEE), 504 to 552 (ERKE…NTDD), and 1110 to 1135 (MVEGDKEKDKTNEEKNKDEVKAEMTQ). Acidic residues-rich tracts occupy residues 360–372 (LEDDEKDNDEEEE) and 524–533 (SAEDDNDNDN). Positions 540 to 549 (NNNNNNNNTN) are enriched in low complexity. Residues 1112–1131 (EGDKEKDKTNEEKNKDEVKA) show a composition bias toward basic and acidic residues. A Helicase ATP-binding domain is found at 1200 to 1375 (YFSLLNRMNL…RQTFCTNFYV (176 aa)). Residues 1213 to 1220 (LPTGGGKS) and 1240 to 1247 (MNMVTLVL) each bind ATP. The short motif at 1322–1325 (DEAH) is the DEAH box element. A Helicase C-terminal domain is found at 1401–1559 (DLRTLMKRTK…CVRSFLASEM (159 aa)). Residues 1613 to 1643 (YNASFSSSPPPQPGNSSGMSAMNTNTTSTTP) form a disordered region. Over residues 1626–1642 (GNSSGMSAMNTNTTSTT) the composition is skewed to low complexity. Residues 1804–1821 (STCYKCGKADHNLRECKL) form a CCHC-type zinc finger.

It belongs to the helicase family. RecQ subfamily.

It catalyses the reaction Couples ATP hydrolysis with the unwinding of duplex DNA by translocating in the 3'-5' direction.. The catalysed reaction is ATP + H2O = ADP + phosphate + H(+). Functionally, a probable ATP-dependent 3'-5' DNA helicase. Has a role in telomerase-independent telomere maintenance. This Schizosaccharomyces pombe (strain 972 / ATCC 24843) (Fission yeast) protein is ATP-dependent DNA helicase tlh1.